Consider the following 409-residue polypeptide: Probable tRNA N6-adenosine threonylcarbamoyltransferase, mitochondrial (409 aa).

A mitochondrion-targeting transit peptide spans 1-31 (MHALRNFAGNGIANVFGCGIRRRLSYVLGIE). A divalent metal cation is bound by residues His-135 and His-139. Substrate is bound by residues 159–163 (LASGG), Asp-192, Gly-212, Glu-216, 322–323 (NN), and Ser-350. Residue Asp-351 participates in a divalent metal cation binding.

The protein belongs to the KAE1 / TsaD family. Homodimer. A divalent metal cation serves as cofactor.

Its subcellular location is the mitochondrion. It carries out the reaction L-threonylcarbamoyladenylate + adenosine(37) in tRNA = N(6)-L-threonylcarbamoyladenosine(37) in tRNA + AMP + H(+). Functionally, required for the formation of a threonylcarbamoyl group on adenosine at position 37 (t(6)A37) in mitochondrial tRNAs that read codons beginning with adenine. Probably involved in the transfer of the threonylcarbamoyl moiety of threonylcarbamoyl-AMP (TC-AMP) to the N6 group of A37. Involved in mitochondrial genome maintenance. The chain is Probable tRNA N6-adenosine threonylcarbamoyltransferase, mitochondrial from Drosophila melanogaster (Fruit fly).